The chain runs to 425 residues: Enolase (425 aa).

Gln-162 provides a ligand contact to (2R)-2-phosphoglycerate. Glu-204 acts as the Proton donor in catalysis. Mg(2+) is bound by residues Asp-241, Glu-284, and Asp-311. (2R)-2-phosphoglycerate is bound by residues Lys-336, Arg-365, Ser-366, and Lys-387. Lys-336 acts as the Proton acceptor in catalysis.

The protein belongs to the enolase family. Mg(2+) is required as a cofactor.

It localises to the cytoplasm. Its subcellular location is the secreted. It is found in the cell surface. It catalyses the reaction (2R)-2-phosphoglycerate = phosphoenolpyruvate + H2O. It functions in the pathway carbohydrate degradation; glycolysis; pyruvate from D-glyceraldehyde 3-phosphate: step 4/5. Its function is as follows. Catalyzes the reversible conversion of 2-phosphoglycerate (2-PG) into phosphoenolpyruvate (PEP). It is essential for the degradation of carbohydrates via glycolysis. The polypeptide is Enolase (Brucella anthropi (strain ATCC 49188 / DSM 6882 / CCUG 24695 / JCM 21032 / LMG 3331 / NBRC 15819 / NCTC 12168 / Alc 37) (Ochrobactrum anthropi)).